Here is a 321-residue protein sequence, read N- to C-terminus: Ferrochelatase (321 aa).

His-194 and Glu-275 together coordinate Fe cation.

This sequence belongs to the ferrochelatase family.

The protein localises to the cytoplasm. The enzyme catalyses heme b + 2 H(+) = protoporphyrin IX + Fe(2+). Its pathway is porphyrin-containing compound metabolism; protoheme biosynthesis; protoheme from protoporphyrin-IX: step 1/1. Catalyzes the ferrous insertion into protoporphyrin IX. The protein is Ferrochelatase of Wigglesworthia glossinidia brevipalpis.